The chain runs to 739 residues: BEL1-like homeodomain protein 2 (739 aa).

Disordered stretches follow at residues 23–73 (SQDY…ESSV) and 143–222 (LMNP…NSQT). Residues 41–58 (NFSNGFDRSDSPNLTTQQ) show a composition bias toward polar residues. Residues 145-155 (NPPPPQQPPSP) are compositionally biased toward pro residues. Residues 179 to 190 (TNTTHHQNYTNH) show a composition bias toward low complexity. The tract at residues 316–332 (SRYTTAAQELLEEFCSV) is SR/KY domain. Residues 341–378 (KLGNSSNPNTCGGDGGGSSPSSAGANKEHPPLSASDRI) are disordered. Residues 376–447 (DRIEHQRRKV…CLKDAVAAQL (72 aa)) form a BELL domain region. A DNA-binding region (homeobox) is located at residues 498-560 (AWRPQRGLPE…NARVRLWKPM (63 aa)). The segment at 567–627 (QESKEREREE…TAPDASDADA (61 aa)) is disordered. The span at 576–585 (EELEENEEDQ) shows a compositional bias: acidic residues. Positions 586-596 (ETKNSNDDKST) are enriched in basic and acidic residues. Over residues 597-627 (KSNNNESNFTAVRTTSQTPTTTAPDASDADA) the composition is skewed to low complexity.

It belongs to the TALE/BELL homeobox family. May form heterodimeric complexes with TALE/KNOX proteins STM, KNAT1/BP, KNAT2 and KNAT5. Interacts with OFP1, OFP2, OFP4 and OFP5. Interacts with KNATM, isoform KNATM-B. In terms of tissue distribution, expressed in lateral organs.

The protein localises to the nucleus. Transcription factor that establishes leaf shape by repressing growth in specific subdomains of the leaf. Negatively regulates knox homeobox gene KNAT1/BP expression. This Arabidopsis thaliana (Mouse-ear cress) protein is BEL1-like homeodomain protein 2 (BLH2).